A 335-amino-acid chain; its full sequence is Pyruvate dehydrogenase E1 component subunit beta (335 aa).

Residue Glu60 coordinates thiamine diphosphate. K(+) contacts are provided by Ala161, Ile162, and Asn166.

Heterodimer of an alpha and a beta chain. Thiamine diphosphate serves as cofactor.

Its subcellular location is the plastid. The protein localises to the chloroplast. The catalysed reaction is N(6)-[(R)-lipoyl]-L-lysyl-[protein] + pyruvate + H(+) = N(6)-[(R)-S(8)-acetyldihydrolipoyl]-L-lysyl-[protein] + CO2. Functionally, the pyruvate dehydrogenase complex catalyzes the overall conversion of pyruvate to acetyl-CoA and CO(2). It contains multiple copies of three enzymatic components: pyruvate dehydrogenase (E1), dihydrolipoamide acetyltransferase (E2) and lipoamide dehydrogenase (E3). The chain is Pyruvate dehydrogenase E1 component subunit beta (pdhB) from Chlorokybus atmophyticus (Soil alga).